Reading from the N-terminus, the 326-residue chain is Malate dehydrogenase (326 aa).

Residue 11–17 (GAAGQIG) coordinates NAD(+). Substrate is bound by residues R92 and R98. NAD(+) is bound by residues N105, Q112, and 129–131 (VGN). Substrate contacts are provided by N131 and R162. H187 (proton acceptor) is an active-site residue.

It belongs to the LDH/MDH superfamily. MDH type 2 family.

The catalysed reaction is (S)-malate + NAD(+) = oxaloacetate + NADH + H(+). Catalyzes the reversible oxidation of malate to oxaloacetate. The protein is Malate dehydrogenase of Leptospira interrogans serogroup Icterohaemorrhagiae serovar Lai (strain 56601).